A 102-amino-acid chain; its full sequence is Cytochrome c oxidase subunit 6a, mitochondrial (102 aa).

The N-terminal 36 residues, 1–36 (MATAIVRSALSRAVTRAAPKTSVAPKRNFSSSAGHD), are a transit peptide targeting the mitochondrion.

This sequence belongs to the cytochrome c oxidase subunit 6A (TC 3.D.4.11) family.

The protein localises to the mitochondrion inner membrane. Functionally, this protein is one of the nuclear-coded polypeptide chains of cytochrome c oxidase, the terminal oxidase in mitochondrial electron transport. The chain is Cytochrome c oxidase subunit 6a, mitochondrial (COX6A) from Arabidopsis thaliana (Mouse-ear cress).